The primary structure comprises 530 residues: Membrane-associated transporter protein (530 aa).

Over 1 to 46 (MGSNSGQAGRHIYKSLADDGPFDSVEPPKRPTSRLIMHSMAMFGRE) the chain is Cytoplasmic. A helical membrane pass occupies residues 47–67 (FCYAVEAAYVTPVLLSVGLPS). Residue Ser68 is a topological domain, extracellular. A helical transmembrane segment spans residues 69-89 (LYSIVWFLSPILGFLLQPVVG). At 90–110 (SASDHCRSRWGRRRPYILTLG) the chain is on the cytoplasmic side. Residues 111–131 (VMMLVGMALYLNGATVVAALI) form a helical membrane-spanning segment. Topologically, residues 132 to 138 (ANPRRKL) are extracellular. A helical transmembrane segment spans residues 139-159 (VWAISVTMIGVVLFDFAADFI). The Cytoplasmic segment spans residues 160 to 184 (DGPIKAYLFDVCSHQDKEKGLHYHA). A helical transmembrane segment spans residues 185–205 (LFTGFGGALGYLLGAIDWAHL). Residues 206 to 216 (ELGRLLGTEFQ) are Extracellular-facing. Residues 217–237 (VMFFFSALVLTLCFTVHLCSI) traverse the membrane as a helical segment. Residues 238 to 318 (SEAPLTEVAK…ALVNMPPHYR (81 aa)) lie on the Cytoplasmic side of the membrane. The helical transmembrane segment at 319–339 (YLCISHLIGWTAFLSNMLFFT) threads the bilayer. Residues 340–366 (DFMGQIVYRGDPYSAHNSTEFLIYERG) are Extracellular-facing. Asn356 is a glycosylation site (N-linked (GlcNAc...) asparagine). The chain crosses the membrane as a helical span at residues 367–387 (VEVGCWGLCINSVFSSLYSYF). Over 388–398 (QKVLVSYIGLK) the chain is Cytoplasmic. The helical transmembrane segment at 399–419 (GLYFTGYLLFGLGTGFIGLFP) threads the bilayer. Over 420-425 (NVYSTL) the chain is Extracellular. A helical membrane pass occupies residues 426 to 446 (VLCSLFGVMSSTLYTVPFNLI). Topologically, residues 447-477 (TEYHREEEKERQQAPGGDPDNSVRGKGMDCA) are cytoplasmic. The chain crosses the membrane as a helical span at residues 478–498 (TLTCMVQLAQILVGGGLGFLV). The Extracellular segment spans residues 499 to 504 (NTAGTV). Residues 505-525 (VVVVITASAVALIGCCFVALF) form a helical membrane-spanning segment. Residues 526-530 (VRYVD) lie on the Cytoplasmic side of the membrane.

Belongs to the glycoside-pentoside-hexuronide (GPH) cation symporter transporter (TC 2.A.2) family. As to quaternary structure, interacts with TYRP1. Expressed in mature melanocytes.

The protein localises to the melanosome membrane. It catalyses the reaction sucrose(out) + H(+)(out) = sucrose(in) + H(+)(in). The catalysed reaction is D-glucose(out) + H(+)(out) = D-glucose(in) + H(+)(in). In terms of biological role, proton-associated glucose and sucrose transporter. May be able to transport also fructose. Expressed at a late melanosome maturation stage where functions as proton/glucose exporter which increase lumenal pH by decreasing glycolysis. Regulates melanogenesis by maintaining melanosome neutralization that is initially initiated by transient OCA2 and required for a proper function of the tyrosinase TYR. The chain is Membrane-associated transporter protein from Homo sapiens (Human).